We begin with the raw amino-acid sequence, 451 residues long: Phosphoglucosamine mutase (451 aa).

Residue Ser102 is the Phosphoserine intermediate of the active site. The Mg(2+) site is built by Ser102, Asp242, Asp244, and Asp246. Residue Ser102 is modified to Phosphoserine.

Belongs to the phosphohexose mutase family. It depends on Mg(2+) as a cofactor. In terms of processing, activated by phosphorylation.

It catalyses the reaction alpha-D-glucosamine 1-phosphate = D-glucosamine 6-phosphate. Functionally, catalyzes the conversion of glucosamine-6-phosphate to glucosamine-1-phosphate. This is Phosphoglucosamine mutase from Staphylococcus epidermidis (strain ATCC 35984 / DSM 28319 / BCRC 17069 / CCUG 31568 / BM 3577 / RP62A).